We begin with the raw amino-acid sequence, 238 residues long: Ribonuclease PH (238 aa).

Phosphate contacts are provided by residues Arg-86 and 124-126 (GTR).

The protein belongs to the RNase PH family. In terms of assembly, homohexameric ring arranged as a trimer of dimers.

It carries out the reaction tRNA(n+1) + phosphate = tRNA(n) + a ribonucleoside 5'-diphosphate. Its function is as follows. Phosphorolytic 3'-5' exoribonuclease that plays an important role in tRNA 3'-end maturation. Removes nucleotide residues following the 3'-CCA terminus of tRNAs; can also add nucleotides to the ends of RNA molecules by using nucleoside diphosphates as substrates, but this may not be physiologically important. Probably plays a role in initiation of 16S rRNA degradation (leading to ribosome degradation) during starvation. The protein is Ribonuclease PH of Acinetobacter baumannii (strain AB307-0294).